A 186-amino-acid polypeptide reads, in one-letter code: Putative 5'(3')-deoxyribonucleotidase (186 aa).

It belongs to the 5'(3')-deoxyribonucleotidase family. Mg(2+) is required as a cofactor.

In terms of biological role, dephosphorylates the 5' and 2'(3')-phosphates of deoxyribonucleotides. In Bordetella parapertussis (strain 12822 / ATCC BAA-587 / NCTC 13253), this protein is Putative 5'(3')-deoxyribonucleotidase.